The chain runs to 342 residues: S-adenosylmethionine:tRNA ribosyltransferase-isomerase (342 aa).

Belongs to the QueA family. As to quaternary structure, monomer.

The protein localises to the cytoplasm. The catalysed reaction is 7-aminomethyl-7-carbaguanosine(34) in tRNA + S-adenosyl-L-methionine = epoxyqueuosine(34) in tRNA + adenine + L-methionine + 2 H(+). It functions in the pathway tRNA modification; tRNA-queuosine biosynthesis. Functionally, transfers and isomerizes the ribose moiety from AdoMet to the 7-aminomethyl group of 7-deazaguanine (preQ1-tRNA) to give epoxyqueuosine (oQ-tRNA). This chain is S-adenosylmethionine:tRNA ribosyltransferase-isomerase, found in Streptococcus pyogenes serotype M1.